The primary structure comprises 640 residues: MPIITLPNGDQKSFDHPVSVMEVAQSIGPGLAKNTVAGRVNDRLVDACDLITEDSTLQIITPKDEEGLEIIRHSCAHLVGHAVKQLFPEAKMVIGPVIEEGFYYDIWMPRPFTLDDMAAIEERMKKLIDQDYDVIKKMTPRDEVIKVFTDRGEEYKLRLVEDMPEEKAMGLYYHQEYVDMCRGPHVPNTKFLKSFKLTKISGAYWRGDAKNEQLQRIYGTAWADKKQLAAYIKRIEEAEKRDHRKIGKALDLFHMQEEAPGMVFWHANGWTIYQVLEQYMRKVQQDNGYQEIKTPQIVDFTLWEKSGHAANYAENMFTTHSESRNYAVKPMNCPCHVQVFNQGLKSYRDLPIRLAEFGSCHRNEPSGSLHGIMRVRGFTQDDAHIFCTKEQIGKEVADFIKLTLDVYKDFGFEEVQMKLSTRPEKRVGDDALWDLAEKSLADALDAAGLEWELQPGEGAFYGPKIEFSLKDCLGRVWQCGTIQCDFNLPVRLDASYVTEENERDQPVMLHRAILGSFERFIGILIEHYAGFMPPWLSPVQACVMNITDSQAEASEQVVAKLKENGLRAISDLRNEKIGFKIRERTLERIPYLLVLGDREVEEGTVNVRTRSGKNLGTMSVDAFIDLVKSAVAERGRYIVE.

Residues methionine 1–threonine 61 enclose the TGS domain. The catalytic stretch occupies residues aspartate 242 to proline 533. Zn(2+) contacts are provided by cysteine 333, histidine 384, and histidine 510.

This sequence belongs to the class-II aminoacyl-tRNA synthetase family. In terms of assembly, homodimer. Zn(2+) is required as a cofactor.

It is found in the cytoplasm. It carries out the reaction tRNA(Thr) + L-threonine + ATP = L-threonyl-tRNA(Thr) + AMP + diphosphate + H(+). In terms of biological role, catalyzes the attachment of threonine to tRNA(Thr) in a two-step reaction: L-threonine is first activated by ATP to form Thr-AMP and then transferred to the acceptor end of tRNA(Thr). Also edits incorrectly charged L-seryl-tRNA(Thr). The sequence is that of Threonine--tRNA ligase from Acinetobacter baumannii (strain AB307-0294).